Here is a 521-residue protein sequence, read N- to C-terminus: MAVIKRALISVSDKTGIVEFARELAGYGVEILSTGGTAALLRQEGLAVKDVSEYTGFPEMLDGRVKTLHPKVHGGLLGMRENPAHVAKMKEHGIEPIDMVVVNLYPFEATVAKPDCTLEDAIENIDIGGPTMLRSAAKNNRDVTVVVDHVDYDQVLAEMKGSGGAVSRGTNFKLAVKVYQHTAAYDGAISNWLGQRMGDELADFSDTLTVQFKKVQDMRYGENPHQKAAFYVERDVQEASISTSRQLQGKELSYNNIADTDAALECVKQFNEGPACVIVKHANPCGVALGSNLLEAYNRAFSTDSESAFGGIIAFNRELDGTTAQAIVERQFVEVIIAPAVSAEAIDVVATKKNVRLLECGYWPQEPGARYDFKRVNGGLLVQDADLLLSGDIKPVTKRVPTEEEMRDLLFTWRVAKFVKSNAIVYGKDGMTIGVGAGQMSRVNSARIAGIKAELAGLEVPGSVMASDAFFPFRDGLDNAAKAGIKAVIQPGGSIRDEEVIAAADEHGIAMVFTGMRHFRH.

An MGS-like domain is found at 1-147 (MAVIKRALIS…KNNRDVTVVV (147 aa)).

It belongs to the PurH family.

It catalyses the reaction (6R)-10-formyltetrahydrofolate + 5-amino-1-(5-phospho-beta-D-ribosyl)imidazole-4-carboxamide = 5-formamido-1-(5-phospho-D-ribosyl)imidazole-4-carboxamide + (6S)-5,6,7,8-tetrahydrofolate. It carries out the reaction IMP + H2O = 5-formamido-1-(5-phospho-D-ribosyl)imidazole-4-carboxamide. Its pathway is purine metabolism; IMP biosynthesis via de novo pathway; 5-formamido-1-(5-phospho-D-ribosyl)imidazole-4-carboxamide from 5-amino-1-(5-phospho-D-ribosyl)imidazole-4-carboxamide (10-formyl THF route): step 1/1. It participates in purine metabolism; IMP biosynthesis via de novo pathway; IMP from 5-formamido-1-(5-phospho-D-ribosyl)imidazole-4-carboxamide: step 1/1. The polypeptide is Bifunctional purine biosynthesis protein PurH (Syntrophotalea carbinolica (strain DSM 2380 / NBRC 103641 / GraBd1) (Pelobacter carbinolicus)).